A 473-amino-acid polypeptide reads, in one-letter code: Cysteine--tRNA ligase (473 aa).

Cys30 provides a ligand contact to Zn(2+). A 'HIGH' region motif is present at residues 32 to 42 (MTVYDYCHIGH). The Zn(2+) site is built by Cys213, His238, and Glu242. A 'KMSKS' region motif is present at residues 270-274 (KMSKS). An ATP-binding site is contributed by Lys273.

It belongs to the class-I aminoacyl-tRNA synthetase family. As to quaternary structure, monomer. The cofactor is Zn(2+).

The protein localises to the cytoplasm. It catalyses the reaction tRNA(Cys) + L-cysteine + ATP = L-cysteinyl-tRNA(Cys) + AMP + diphosphate. In Acinetobacter baumannii (strain AB307-0294), this protein is Cysteine--tRNA ligase.